We begin with the raw amino-acid sequence, 231 residues long: L-ribulose-5-phosphate 4-epimerase (231 aa).

Residues glycine 27 to asparagine 28, serine 44 to glycine 45, and serine 74 to serine 75 each bind substrate. Positions 76, 95, and 97 each coordinate Zn(2+). Aspartate 120 serves as the catalytic Proton donor/acceptor. Histidine 171 contributes to the Zn(2+) binding site. The active-site Proton donor/acceptor is the tyrosine 229.

Belongs to the aldolase class II family. AraD/FucA subfamily. As to quaternary structure, homotetramer. It depends on Zn(2+) as a cofactor.

It carries out the reaction L-ribulose 5-phosphate = D-xylulose 5-phosphate. It functions in the pathway carbohydrate degradation; L-arabinose degradation via L-ribulose; D-xylulose 5-phosphate from L-arabinose (bacterial route): step 3/3. Its function is as follows. Involved in the degradation of L-arabinose. Catalyzes the interconversion of L-ribulose 5-phosphate (LRu5P) and D-xylulose 5-phosphate (D-Xu5P) via a retroaldol/aldol mechanism (carbon-carbon bond cleavage analogous to a class II aldolase reaction). In Salmonella typhimurium (strain LT2 / SGSC1412 / ATCC 700720), this protein is L-ribulose-5-phosphate 4-epimerase.